Reading from the N-terminus, the 567-residue chain is Thiol:disulfide interchange protein DsbD (567 aa).

A signal peptide spans 1 to 19; that stretch reads MAQRIFTLILLLCSTSAFA. Cystine bridges form between C122–C128 and C185–C307. The next 8 membrane-spanning stretches (helical) occupy residues 166–186, 210–230, 246–266, 299–319, 326–346, 360–380, 387–407, and 418–438; these read LPFSALWALLIGIGIAFTPCV, LLLAFIYVQGMALTYTALGLV, YVLIGLAIVFTLLALSMFGLF, IAGLICSPCTTAPLSAILLYI, WLGGGTLYLYALGMGLPLMLV, WMAHVKTAFGFVILALPVFLL, AWGLRLWSLLGVAFFGWAFIT, and IVQIILLAAALISVRPLQDWA. The Thioredoxin domain occupies 435–567; it reads QDWAFGSPSA…FSAHLHDRQP (133 aa). C482 and C485 form a disulfide bridge.

Belongs to the thioredoxin family. DsbD subfamily.

The protein resides in the cell inner membrane. The catalysed reaction is [protein]-dithiol + NAD(+) = [protein]-disulfide + NADH + H(+). It catalyses the reaction [protein]-dithiol + NADP(+) = [protein]-disulfide + NADPH + H(+). Its function is as follows. Required to facilitate the formation of correct disulfide bonds in some periplasmic proteins and for the assembly of the periplasmic c-type cytochromes. Acts by transferring electrons from cytoplasmic thioredoxin to the periplasm. This transfer involves a cascade of disulfide bond formation and reduction steps. The polypeptide is Thiol:disulfide interchange protein DsbD (Salmonella choleraesuis (strain SC-B67)).